The primary structure comprises 252 residues: Imidazole glycerol phosphate synthase subunit HisF (252 aa).

Active-site residues include Asp-11 and Asp-130.

The protein belongs to the HisA/HisF family. In terms of assembly, heterodimer of HisH and HisF.

The protein localises to the cytoplasm. The enzyme catalyses 5-[(5-phospho-1-deoxy-D-ribulos-1-ylimino)methylamino]-1-(5-phospho-beta-D-ribosyl)imidazole-4-carboxamide + L-glutamine = D-erythro-1-(imidazol-4-yl)glycerol 3-phosphate + 5-amino-1-(5-phospho-beta-D-ribosyl)imidazole-4-carboxamide + L-glutamate + H(+). Its pathway is amino-acid biosynthesis; L-histidine biosynthesis; L-histidine from 5-phospho-alpha-D-ribose 1-diphosphate: step 5/9. Functionally, IGPS catalyzes the conversion of PRFAR and glutamine to IGP, AICAR and glutamate. The HisF subunit catalyzes the cyclization activity that produces IGP and AICAR from PRFAR using the ammonia provided by the HisH subunit. This chain is Imidazole glycerol phosphate synthase subunit HisF, found in Desulforamulus reducens (strain ATCC BAA-1160 / DSM 100696 / MI-1) (Desulfotomaculum reducens).